The following is a 418-amino-acid chain: Thermolabile hemolysin (418 aa).

The N-terminal stretch at 1 to 19 (MMKKTITLLTALLPLASAV) is a signal peptide. Ser153 (nucleophile) is an active-site residue. Residues Asp390 and His393 contribute to the active site.

It belongs to the 'GDSL' lipolytic enzyme family. In terms of processing, there are two forms of LDH. The LDH(S) may be a protein in which 13 residues of the N-terminal of LDH(L) are deleted.

Its subcellular location is the secreted. Phospholipase hydrolyzing both fatty acid esters of phospholipid, i.e. it hydrolyzes phosphatidylcholine (PC) to lysophosphatidylcholine (LPC) and then LPC to glycerophosphorylcholine (GPC). In Vibrio parahaemolyticus serotype O3:K6 (strain RIMD 2210633), this protein is Thermolabile hemolysin.